Here is a 424-residue protein sequence, read N- to C-terminus: CinA-like protein (424 aa).

It belongs to the CinA family.

The protein is CinA-like protein of Shewanella amazonensis (strain ATCC BAA-1098 / SB2B).